Reading from the N-terminus, the 490-residue chain is Cardiolipin synthase 1 (490 aa).

2 helical membrane passes run 9–29 (ILTILLVVGFITNVVLAFVII) and 42–62 (WAWLFVLFVLPVIGFILYLFL). PLD phosphodiesterase domains follow at residues 225–252 (MNNRNHRKIIIIDGQIGYIGGFNVGDDY) and 403–430 (QNGFIHSKILMIDDEISSIGSANMDFRS). Catalysis depends on residues His230, Lys232, Asp237, His408, Lys410, and Asp415.

This sequence belongs to the phospholipase D family. Cardiolipin synthase subfamily.

It is found in the cell membrane. It catalyses the reaction 2 a 1,2-diacyl-sn-glycero-3-phospho-(1'-sn-glycerol) = a cardiolipin + glycerol. Its function is as follows. Catalyzes the reversible phosphatidyl group transfer from one phosphatidylglycerol molecule to another to form cardiolipin (CL) (diphosphatidylglycerol) and glycerol. The sequence is that of Cardiolipin synthase 1 (cls1) from Staphylococcus epidermidis (strain ATCC 35984 / DSM 28319 / BCRC 17069 / CCUG 31568 / BM 3577 / RP62A).